The sequence spans 683 residues: Elongation factor G-like protein (683 aa).

The region spanning 5-267 (QNVRSAALIG…YLGDIGVSPE (263 aa)) is the tr-type G domain. GTP is bound by residues 14-21 (GHNGSGKS), 73-77 (DTPGF), and 127-130 (NQMD).

Belongs to the TRAFAC class translation factor GTPase superfamily. Classic translation factor GTPase family. EF-G/EF-2 subfamily.

The polypeptide is Elongation factor G-like protein (Thermotoga maritima (strain ATCC 43589 / DSM 3109 / JCM 10099 / NBRC 100826 / MSB8)).